A 535-amino-acid polypeptide reads, in one-letter code: Peroxisomal membrane protein PEX29 (535 aa).

2 consecutive transmembrane segments (helical) span residues 139-159 and 176-196; these read LSVPFVLIDQVIIIFSWSKPL and ILLLSLPFFYTCFEIIVPAYM. Asn-239 carries N-linked (GlcNAc...) asparagine glycosylation. The helical transmembrane segment at 247–267 threads the bilayer; it reads MLLYVMSYDFVTSLIVKYLYF. The N-linked (GlcNAc...) asparagine glycan is linked to Asn-271. 2 helical membrane-spanning segments follow: residues 272-292 and 297-317; these read ITIFIFVALLTSGTLLTLFGA and AMLPFIKVTLSVGLWAATIAM. 2 N-linked (GlcNAc...) asparagine glycosylation sites follow: Asn-450 and Asn-515. The segment at 511-535 is disordered; the sequence is AHRRNKSMESSNSLHPVKSIDSVDG.

It belongs to the PEX28-32 family. PEX29 subfamily.

It localises to the endoplasmic reticulum membrane. With PEX23, contributes to the formation of endoplasmic reticulum-mitochondria junctions which are important for mitochondrial function. Involved in lipid dropplets formation. The chain is Peroxisomal membrane protein PEX29 from Ogataea parapolymorpha (strain ATCC 26012 / BCRC 20466 / JCM 22074 / NRRL Y-7560 / DL-1) (Yeast).